We begin with the raw amino-acid sequence, 439 residues long: O-methyltransferase aurJ (439 aa).

Asp-283 contributes to the S-adenosyl-L-methionine binding site. His-338 serves as the catalytic Proton acceptor.

It belongs to the class I-like SAM-binding methyltransferase superfamily. Cation-independent O-methyltransferase family. COMT subfamily.

The catalysed reaction is norrubrofusarin + S-adenosyl-L-methionine = rubrofusarin + S-adenosyl-L-homocysteine + H(+). It participates in pigment biosynthesis. Its function is as follows. O-methyltransferase; part of the gene cluster that mediates the biosynthesis of aurofusarin, a red mycelium pigment which is acting as a mycotoxin. The first step is performed by the polyketide synthase which condenses one acetyl-CoA and 6 malonyl-CoA units to form the first intermediate, the cyclic heptaketide and yellow pigment YWA1. The C2 hydroxyl group in the pyrone ring of YWA1 is probably formed during ring closure by an aldol-type cyclization reaction. The dehydratase aurZ then acts as the first tailoring enzyme in the aurofusarin biosynthetic pathway by converting YWA1 to nor-rubrofusarin. Nor-rubrofusarin is then methylated to rubrofusarin by the O-methyltransferase aurJ. Rubrofusarin is then transported across the plasma membrane by the rubrofusarin-specific pump aurT for further enzymatic processing by the extracellular complex composed of GIP1, aurF, aurO and aurS to yield aurofusarin. This chain is O-methyltransferase aurJ, found in Gibberella zeae (strain ATCC MYA-4620 / CBS 123657 / FGSC 9075 / NRRL 31084 / PH-1) (Wheat head blight fungus).